The primary structure comprises 377 residues: UPF0754 membrane protein RBAM_010020 (377 aa).

2 helical membrane-spanning segments follow: residues 1 to 21 and 357 to 377; these read MGIAGTFLFMIVIGAAIGAVT and YLGGLLGGIIGAIQALFVILF.

It belongs to the UPF0754 family.

It is found in the cell membrane. This chain is UPF0754 membrane protein RBAM_010020, found in Bacillus velezensis (strain DSM 23117 / BGSC 10A6 / LMG 26770 / FZB42) (Bacillus amyloliquefaciens subsp. plantarum).